Here is a 401-residue protein sequence, read N- to C-terminus: MAKQKFERTKPHVNVGTIGHVDHGKTTLTAAITKVLALQGAAQFVSYDQIDNAPEERARGITIAIRHVEYQTAKRHYAHVDCPGHADYIKNMITGAAQMDGAILVVSAPDGPMPQTREHVLLARQVQVPAMVVFLNKVDMMDDEELLELVELELRELLSNHGFPGDEIPIIRGSALAALSSASTDINAPEYQCILDLMNAVDEYIPTPVREVDKPFLMPIEDVFGIKGRGTVVTGRIERGKVKMGDTVEIVGMSHEAPKKTVVTGVEMFQKTLDEGIAGDNVGVLLRGIERTEVERGQVLAAPGSIKPHAKFKANVYVLKKEEGGRHTPFFPGYRPQFYIRTTDVTGAISLPAGVEMVMPGDNIEMLVELIVPVAIEEGLRFAIREGGRTVGAGVVSAIVD.

In terms of domain architecture, tr-type G spans K10–V209. The interval G19–T26 is G1. Residue G19 to T26 participates in GTP binding. Residue T26 participates in Mg(2+) binding. Residues G60–A64 are G2. Residues D81–G84 form a G3 region. Residues D81–H85 and N136–D139 each bind GTP. Residues N136 to D139 are G4. Positions S174–L176 are G5.

Belongs to the TRAFAC class translation factor GTPase superfamily. Classic translation factor GTPase family. EF-Tu/EF-1A subfamily. As to quaternary structure, monomer.

Its subcellular location is the cytoplasm. It carries out the reaction GTP + H2O = GDP + phosphate + H(+). GTP hydrolase that promotes the GTP-dependent binding of aminoacyl-tRNA to the A-site of ribosomes during protein biosynthesis. The polypeptide is Elongation factor Tu 2 (Roseiflexus castenholzii (strain DSM 13941 / HLO8)).